A 404-amino-acid polypeptide reads, in one-letter code: CCA-adding enzyme (404 aa).

ATP-binding residues include Gly27 and Arg30. Residues Gly27 and Arg30 each contribute to the CTP site. Residues Asp40 and Asp42 each contribute to the Mg(2+) site. 5 residues coordinate ATP: Arg111, Asp154, Arg157, Arg160, and Arg163. CTP contacts are provided by Arg111, Asp154, Arg157, Arg160, and Arg163.

The protein belongs to the tRNA nucleotidyltransferase/poly(A) polymerase family. Bacterial CCA-adding enzyme type 3 subfamily. Homodimer. Requires Mg(2+) as cofactor.

It catalyses the reaction a tRNA precursor + 2 CTP + ATP = a tRNA with a 3' CCA end + 3 diphosphate. The catalysed reaction is a tRNA with a 3' CCA end + 2 CTP + ATP = a tRNA with a 3' CCACCA end + 3 diphosphate. Functionally, catalyzes the addition and repair of the essential 3'-terminal CCA sequence in tRNAs without using a nucleic acid template. Adds these three nucleotides in the order of C, C, and A to the tRNA nucleotide-73, using CTP and ATP as substrates and producing inorganic pyrophosphate. tRNA 3'-terminal CCA addition is required both for tRNA processing and repair. Also involved in tRNA surveillance by mediating tandem CCA addition to generate a CCACCA at the 3' terminus of unstable tRNAs. While stable tRNAs receive only 3'-terminal CCA, unstable tRNAs are marked with CCACCA and rapidly degraded. In Geobacillus sp. (strain WCH70), this protein is CCA-adding enzyme.